Consider the following 390-residue polypeptide: Cystathionine beta-lyase MetC (390 aa).

Residue Lys-200 is modified to N6-(pyridoxal phosphate)lysine.

Belongs to the trans-sulfuration enzymes family. As to quaternary structure, homotetramer. The cofactor is pyridoxal 5'-phosphate.

The protein resides in the cytoplasm. It catalyses the reaction L,L-cystathionine + H2O = L-homocysteine + pyruvate + NH4(+). The enzyme catalyses an S-substituted L-cysteine + H2O = a thiol + pyruvate + NH4(+). Its pathway is amino-acid biosynthesis; L-methionine biosynthesis via de novo pathway; L-homocysteine from L-cystathionine: step 1/1. Catalyzes the transformation of cystathionine into homocysteine. Also exhibits cysteine desulfhydrase activity in vitro, producing sulfide from cysteine. The chain is Cystathionine beta-lyase MetC (metC) from Bacillus subtilis (strain 168).